Reading from the N-terminus, the 240-residue chain is DNA repair protein RecO (240 aa).

The protein belongs to the RecO family.

In terms of biological role, involved in DNA repair and RecF pathway recombination. The chain is DNA repair protein RecO from Pseudoalteromonas atlantica (strain T6c / ATCC BAA-1087).